Consider the following 142-residue polypeptide: Large ribosomal subunit protein uL11 (142 aa).

It belongs to the universal ribosomal protein uL11 family. As to quaternary structure, part of the ribosomal stalk of the 50S ribosomal subunit. Interacts with L10 and the large rRNA to form the base of the stalk. L10 forms an elongated spine to which L12 dimers bind in a sequential fashion forming a multimeric L10(L12)X complex. One or more lysine residues are methylated.

In terms of biological role, forms part of the ribosomal stalk which helps the ribosome interact with GTP-bound translation factors. This chain is Large ribosomal subunit protein uL11, found in Mycoplasma mycoides subsp. mycoides SC (strain CCUG 32753 / NCTC 10114 / PG1).